Reading from the N-terminus, the 351-residue chain is UDP-3-O-acylglucosamine N-acyltransferase (351 aa).

The active-site Proton acceptor is the His-240.

Belongs to the transferase hexapeptide repeat family. LpxD subfamily. Homotrimer.

The enzyme catalyses a UDP-3-O-[(3R)-3-hydroxyacyl]-alpha-D-glucosamine + a (3R)-hydroxyacyl-[ACP] = a UDP-2-N,3-O-bis[(3R)-3-hydroxyacyl]-alpha-D-glucosamine + holo-[ACP] + H(+). It participates in bacterial outer membrane biogenesis; LPS lipid A biosynthesis. Catalyzes the N-acylation of UDP-3-O-acylglucosamine using 3-hydroxyacyl-ACP as the acyl donor. Is involved in the biosynthesis of lipid A, a phosphorylated glycolipid that anchors the lipopolysaccharide to the outer membrane of the cell. The polypeptide is UDP-3-O-acylglucosamine N-acyltransferase (Pseudomonas entomophila (strain L48)).